The chain runs to 120 residues: Large ribosomal subunit protein uL18 (120 aa).

Belongs to the universal ribosomal protein uL18 family. Part of the 50S ribosomal subunit. Part of the 5S rRNA/L5/L18/L25 subcomplex. Contacts the 23S rRNA and 5S rRNA. Required for catalysis of RNase M5.

This is one of the proteins that bind and probably mediate the attachment of the 5S RNA into the large ribosomal subunit, where it forms part of the central protuberance. Its function is as follows. Required for correct processing of both the 5' and 3' ends of 5S rRNA precursor, which is does in conjunction with ribonuclease M5 (RNase M5, rnmV). Possibly folds the 5S rRNA precursor into the correct conformation, thus acting as a chaperone. The sequence is that of Large ribosomal subunit protein uL18 from Bacillus subtilis (strain 168).